The sequence spans 194 residues: Thymidine kinase (194 aa).

ATP is bound by residues 9–16 and 85–88; these read GAMNSGKT and DECQ. Glutamate 86 functions as the Proton acceptor in the catalytic mechanism. Positions 143, 146, 180, and 183 each coordinate Zn(2+).

Belongs to the thymidine kinase family. Homotetramer.

It localises to the cytoplasm. The enzyme catalyses thymidine + ATP = dTMP + ADP + H(+). The protein is Thymidine kinase of Enterococcus faecalis (strain ATCC 700802 / V583).